A 138-amino-acid polypeptide reads, in one-letter code: Large ribosomal subunit protein uL16 (138 aa).

This sequence belongs to the universal ribosomal protein uL16 family. As to quaternary structure, part of the 50S ribosomal subunit.

Functionally, binds 23S rRNA and is also seen to make contacts with the A and possibly P site tRNAs. This is Large ribosomal subunit protein uL16 from Rhodospirillum rubrum (strain ATCC 11170 / ATH 1.1.1 / DSM 467 / LMG 4362 / NCIMB 8255 / S1).